The primary structure comprises 90 residues: uncharacterized protein (90 aa).

This is an uncharacterized protein from Rickettsia prowazekii (strain Madrid E).